We begin with the raw amino-acid sequence, 703 residues long: RING finger protein 214 (703 aa).

Disordered stretches follow at residues methionine 1 to lysine 59, glycine 104 to serine 134, and serine 146 to leucine 197. The residue at position 2 (alanine 2) is an N-acetylalanine. 4 positions are modified to phosphoserine: serine 15, serine 40, serine 47, and serine 54. Over residues threonine 37–lysine 59 the composition is skewed to polar residues. 2 positions are modified to phosphoserine: serine 176 and serine 196. A coiled-coil region spans residues glutamine 220–threonine 379. The segment at phenylalanine 486–valine 552 is disordered. Over residues leucine 493–proline 504 the composition is skewed to low complexity. Residues serine 497, serine 511, and serine 516 each carry the phosphoserine modification. Positions proline 523–glycine 536 are enriched in pro residues. The RING-type; atypical zinc finger occupies cysteine 658–proline 700.

The chain is RING finger protein 214 (RNF214) from Homo sapiens (Human).